A 224-amino-acid polypeptide reads, in one-letter code: UPF0758 protein CBUD_1789 (224 aa).

The MPN domain occupies 102–224 (QLGCTQDAQQ…SFSFAESGLL (123 aa)). Residues His-173, His-175, and Asp-186 each coordinate Zn(2+). Residues 173-186 (HNHPSGVPDPSQAD) carry the JAMM motif motif.

It belongs to the UPF0758 family.

The chain is UPF0758 protein CBUD_1789 from Coxiella burnetii (strain Dugway 5J108-111).